Reading from the N-terminus, the 312-residue chain is tRNA dimethylallyltransferase (312 aa).

G10 to T17 is an ATP binding site. T12–T17 is a binding site for substrate.

It belongs to the IPP transferase family. Monomer. Requires Mg(2+) as cofactor.

The enzyme catalyses adenosine(37) in tRNA + dimethylallyl diphosphate = N(6)-dimethylallyladenosine(37) in tRNA + diphosphate. Catalyzes the transfer of a dimethylallyl group onto the adenine at position 37 in tRNAs that read codons beginning with uridine, leading to the formation of N6-(dimethylallyl)adenosine (i(6)A). The polypeptide is tRNA dimethylallyltransferase (Coprothermobacter proteolyticus (strain ATCC 35245 / DSM 5265 / OCM 4 / BT)).